We begin with the raw amino-acid sequence, 161 residues long: MIVQINDYFIGMIFKGNRLVRNTIPLREEEIFRFYNGKILDEPNKMCMKVGKIILKLYFADLDDKIARDLIDYELNVSSFTKKVLDEVKKIKFGETVSYGDIAKKLNTSPRAVGVALSKNPLPLIIPCHRVVAKNSLGGYSYGIEKKKFILEMEQIKKRLK.

Catalysis depends on C128, which acts as the Nucleophile; methyl group acceptor.

The protein belongs to the MGMT family.

It is found in the cytoplasm. The catalysed reaction is a 6-O-methyl-2'-deoxyguanosine in DNA + L-cysteinyl-[protein] = S-methyl-L-cysteinyl-[protein] + a 2'-deoxyguanosine in DNA. It catalyses the reaction a 4-O-methyl-thymidine in DNA + L-cysteinyl-[protein] = a thymidine in DNA + S-methyl-L-cysteinyl-[protein]. Its function is as follows. Involved in the cellular defense against the biological effects of O6-methylguanine (O6-MeG) and O4-methylthymine (O4-MeT) in DNA. Repairs the methylated nucleobase in DNA by stoichiometrically transferring the methyl group to a cysteine residue in the enzyme. This is a suicide reaction: the enzyme is irreversibly inactivated. The chain is Methylated-DNA--protein-cysteine methyltransferase from Methanocaldococcus vulcanius (strain ATCC 700851 / DSM 12094 / M7) (Methanococcus vulcanius).